The primary structure comprises 263 residues: Diphthine synthase (263 aa).

Residues leucine 11, aspartate 89, alanine 92, 117–118 (SV), leucine 166, and leucine 208 each bind S-adenosyl-L-methionine.

Belongs to the diphthine synthase family. As to quaternary structure, homodimer.

It carries out the reaction 2-[(3S)-amino-3-carboxypropyl]-L-histidyl-[translation elongation factor 2] + 3 S-adenosyl-L-methionine = diphthine-[translation elongation factor 2] + 3 S-adenosyl-L-homocysteine + 3 H(+). The protein operates within protein modification; peptidyl-diphthamide biosynthesis. S-adenosyl-L-methionine-dependent methyltransferase that catalyzes the trimethylation of the amino group of the modified target histidine residue in translation elongation factor 2 (EF-2), to form an intermediate called diphthine. The three successive methylation reactions represent the second step of diphthamide biosynthesis. The chain is Diphthine synthase from Methanopyrus kandleri (strain AV19 / DSM 6324 / JCM 9639 / NBRC 100938).